The chain runs to 168 residues: 3-isopropylmalate dehydratase small subunit (168 aa).

It belongs to the LeuD family. LeuD type 2 subfamily. As to quaternary structure, heterodimer of LeuC and LeuD.

The catalysed reaction is (2R,3S)-3-isopropylmalate = (2S)-2-isopropylmalate. It functions in the pathway amino-acid biosynthesis; L-leucine biosynthesis; L-leucine from 3-methyl-2-oxobutanoate: step 2/4. Catalyzes the isomerization between 2-isopropylmalate and 3-isopropylmalate, via the formation of 2-isopropylmaleate. The protein is 3-isopropylmalate dehydratase small subunit (leuD) of Sulfurisphaera tokodaii (strain DSM 16993 / JCM 10545 / NBRC 100140 / 7) (Sulfolobus tokodaii).